The primary structure comprises 180 residues: Ribosome rescue factor SmrB (180 aa).

A Smr domain is found at 98–173 (LDLHGLTQLQ…GNAALLVLVA (76 aa)).

Belongs to the SmrB family. Associates with collided ribosomes, but not with correctly translating polysomes.

In terms of biological role, acts as a ribosome collision sensor. Detects stalled/collided disomes (pairs of ribosomes where the leading ribosome is stalled and a second ribosome has collided with it) and endonucleolytically cleaves mRNA at the 5' boundary of the stalled ribosome. Stalled/collided disomes form a new interface (primarily via the 30S subunits) that binds SmrB. Cleaved mRNA becomes available for tmRNA ligation, leading to ribosomal subunit dissociation and rescue of stalled ribosomes. This Pectobacterium atrosepticum (strain SCRI 1043 / ATCC BAA-672) (Erwinia carotovora subsp. atroseptica) protein is Ribosome rescue factor SmrB.